The chain runs to 298 residues: 4-hydroxy-tetrahydrodipicolinate synthase (298 aa).

Residue T51 participates in pyruvate binding. Y139 functions as the Proton donor/acceptor in the catalytic mechanism. K167 (schiff-base intermediate with substrate) is an active-site residue. I209 lines the pyruvate pocket.

This sequence belongs to the DapA family. As to quaternary structure, homotetramer; dimer of dimers.

It is found in the cytoplasm. The enzyme catalyses L-aspartate 4-semialdehyde + pyruvate = (2S,4S)-4-hydroxy-2,3,4,5-tetrahydrodipicolinate + H2O + H(+). It participates in amino-acid biosynthesis; L-lysine biosynthesis via DAP pathway; (S)-tetrahydrodipicolinate from L-aspartate: step 3/4. Its function is as follows. Catalyzes the condensation of (S)-aspartate-beta-semialdehyde [(S)-ASA] and pyruvate to 4-hydroxy-tetrahydrodipicolinate (HTPA). In Haemophilus influenzae (strain 86-028NP), this protein is 4-hydroxy-tetrahydrodipicolinate synthase.